A 527-amino-acid polypeptide reads, in one-letter code: Protein disulfide-isomerase A2 (527 aa).

An N-terminal signal peptide occupies residues 1-20 (MDKQLLPVLLLLLGVSGSWG). Residues 20–41 (GQGEEPGGPSEVLPEEPTGEEV) form a disordered region. Positions 29-155 (SEVLPEEPTG…IAEWLRRRVG (127 aa)) constitute a Thioredoxin 1 domain. Residues Cys-74 and Cys-77 each act as nucleophile in the active site. Cys-74 and Cys-77 are disulfide-bonded. N-linked (GlcNAc...) asparagine glycosylation is found at Asn-130 and Asn-287. Residues 355–499 (VIAITAASVA…FSKFLDSGGH (145 aa)) form the Thioredoxin 2 domain. Active-site nucleophile residues include Cys-421 and Cys-424. Cysteines 421 and 424 form a disulfide. The disordered stretch occupies residues 495-527 (DSGGHLPKEEPKEPAASAPEAQANSTLGPKEEL). The N-linked (GlcNAc...) asparagine glycan is linked to Asn-518. The Prevents secretion from ER signature appears at 524–527 (KEEL).

It belongs to the protein disulfide isomerase family. Part of a large chaperone multiprotein complex comprising DNAJB11, HSP90B1, HSPA5, HYOU, PDIA2, PDIA4, PDIA6, PPIB, SDF2L1, UGGT1 and very small amounts of ERP29, but not, or at very low levels, CALR nor CANX. Post-translationally, glycosylated. As to expression, highly expressed in pancreas.

The protein localises to the endoplasmic reticulum lumen. It carries out the reaction Catalyzes the rearrangement of -S-S- bonds in proteins.. Functionally, acts as an intracellular estrogen-binding protein. May be involved in modulating cellular levels and biological functions of estrogens in the pancreas. May act as a chaperone that inhibits aggregation of misfolded proteins. The protein is Protein disulfide-isomerase A2 of Mus musculus (Mouse).